Here is a 77-residue protein sequence, read N- to C-terminus: Large ribosomal subunit protein bL28 (77 aa).

Residues 1 to 20 (MSRVCQVTGKGPVTGNNISH) are disordered.

This sequence belongs to the bacterial ribosomal protein bL28 family.

The protein is Large ribosomal subunit protein bL28 of Pseudomonas syringae pv. tomato (strain ATCC BAA-871 / DC3000).